The following is a 330-amino-acid chain: tRNA pseudouridine synthase B (330 aa).

Residue Asp42 is the Nucleophile of the active site.

This sequence belongs to the pseudouridine synthase TruB family. Type 1 subfamily.

It carries out the reaction uridine(55) in tRNA = pseudouridine(55) in tRNA. Responsible for synthesis of pseudouridine from uracil-55 in the psi GC loop of transfer RNAs. This Lactococcus lactis subsp. cremoris (strain SK11) protein is tRNA pseudouridine synthase B.